A 338-amino-acid polypeptide reads, in one-letter code: DNA-directed RNA polymerase subunit alpha (338 aa).

The alpha N-terminal domain (alpha-NTD) stretch occupies residues 1 to 225 (MLISQRPTLT…ELFGLARELN (225 aa)). Residues 242 to 338 (YIAAYGMPIE…YIDTDPEETE (97 aa)) form an alpha C-terminal domain (alpha-CTD) region. Positions 314-338 (FDPTQLDGYDAATGDYIDTDPEETE) are disordered.

Belongs to the RNA polymerase alpha chain family. Homodimer. The RNAP catalytic core consists of 2 alpha, 1 beta, 1 beta' and 1 omega subunit. When a sigma factor is associated with the core the holoenzyme is formed, which can initiate transcription.

The catalysed reaction is RNA(n) + a ribonucleoside 5'-triphosphate = RNA(n+1) + diphosphate. Functionally, DNA-dependent RNA polymerase catalyzes the transcription of DNA into RNA using the four ribonucleoside triphosphates as substrates. The chain is DNA-directed RNA polymerase subunit alpha from Corynebacterium diphtheriae (strain ATCC 700971 / NCTC 13129 / Biotype gravis).